Consider the following 170-residue polypeptide: Probable inosine/xanthosine triphosphatase (170 aa).

Glu31 contributes to the Mg(2+) binding site.

This sequence belongs to the YjjX NTPase family. As to quaternary structure, homodimer. The cofactor is Mg(2+). It depends on Mn(2+) as a cofactor.

The enzyme catalyses XTP + H2O = XDP + phosphate + H(+). It carries out the reaction ITP + H2O = IDP + phosphate + H(+). In terms of biological role, phosphatase that hydrolyzes non-canonical purine nucleotides such as XTP and ITP to their respective diphosphate derivatives. Probably excludes non-canonical purines from DNA/RNA precursor pool, thus preventing their incorporation into DNA/RNA and avoiding chromosomal lesions. The sequence is that of Probable inosine/xanthosine triphosphatase from Oceanobacillus iheyensis (strain DSM 14371 / CIP 107618 / JCM 11309 / KCTC 3954 / HTE831).